A 615-amino-acid polypeptide reads, in one-letter code: DNA mismatch repair protein MutL (615 aa).

A disordered region spans residues 363–397 (FAEPAAREPVAPRYSPAPASGSRPAAPWPNAQPGY). Over residues 364–387 (AEPAAREPVAPRYSPAPASGSRPA) the composition is skewed to low complexity.

The protein belongs to the DNA mismatch repair MutL/HexB family.

Its function is as follows. This protein is involved in the repair of mismatches in DNA. It is required for dam-dependent methyl-directed DNA mismatch repair. May act as a 'molecular matchmaker', a protein that promotes the formation of a stable complex between two or more DNA-binding proteins in an ATP-dependent manner without itself being part of a final effector complex. In Shigella flexneri, this protein is DNA mismatch repair protein MutL.